Reading from the N-terminus, the 195-residue chain is HTH-type transcriptional regulator TtmR (195 aa).

Residues 47–177 enclose the HTH marR-type domain; the sequence is DSQLCFAVYA…LLDNLASMRD (131 aa). The segment at residues 93 to 116 is a DNA-binding region (H-T-H motif); sequence VKEIGSRLFLDSGTLTPLLKRLEA.

The protein localises to the cytoplasm. Its function is as follows. Formaldehyde-responsive transcription factor that modulates resistance to stress induced by formaldehyde. Impacts the expression of a number of genes encoding transcription factors and/or involved in stress response, including efgA, and which probably collectively trigger a formaldehyde-specific physiological response. Required for optimal transition to methylotrophy. Not involved in a general stress response. The polypeptide is HTH-type transcriptional regulator TtmR (Methylorubrum extorquens (strain PA1) (Methylobacterium extorquens)).